We begin with the raw amino-acid sequence, 193 residues long: Pyridoxal 5'-phosphate synthase subunit PdxT (193 aa).

48–50 (GES) serves as a coordination point for L-glutamine. Cys-80 acts as the Nucleophile in catalysis. L-glutamine is bound by residues Arg-107 and 136-137 (IR). Catalysis depends on charge relay system residues His-172 and Glu-174.

Belongs to the glutaminase PdxT/SNO family. In terms of assembly, in the presence of PdxS, forms a dodecamer of heterodimers. Only shows activity in the heterodimer.

The catalysed reaction is aldehydo-D-ribose 5-phosphate + D-glyceraldehyde 3-phosphate + L-glutamine = pyridoxal 5'-phosphate + L-glutamate + phosphate + 3 H2O + H(+). It catalyses the reaction L-glutamine + H2O = L-glutamate + NH4(+). It functions in the pathway cofactor biosynthesis; pyridoxal 5'-phosphate biosynthesis. Functionally, catalyzes the hydrolysis of glutamine to glutamate and ammonia as part of the biosynthesis of pyridoxal 5'-phosphate. The resulting ammonia molecule is channeled to the active site of PdxS. The polypeptide is Pyridoxal 5'-phosphate synthase subunit PdxT (Clostridium botulinum (strain Loch Maree / Type A3)).